We begin with the raw amino-acid sequence, 570 residues long: MFHPGMTSQPSTSNQMYYDPLYGAEQIVQCNPMDYHQANILCGMQYFNNSHNRYPLLPQMPPQFTNDHPYDFPNVPTISTLDEASSFNGFLIPSQPSSYNNNNISCVFTPTPCTSSQASSQPPPTPTVNPTPIPPNAGAVLTTAMDSCQQISHVLQCYQQGGEDSDFVRKAIESLVKKLKDKRIELDALITAVTSNGKQPTGCVTIQRSLDGRLQVAGRKGVPHVVYARIWRWPKVSKNELVKLVQCQTSSDHPDNICINPYHYERVVSNRITSADQSLHVENSPMKSEYLGDAGVIDSCSDWPNTPPDNNFNGGFAPDQPQLVTPIISDIPIDLNQIYVPTPPQLLDNWCSIIYYELDTPIGETFKVSARDHGKVIVDGGMDPHGENEGRLCLGALSNVHRTEASEKARIHIGRGVELTAHADGNISITSNCKIFVRSGYLDYTHGSEYSSKAHRFTPNESSFTVFDIRWAYMQMLRRSRSSNEAVRAQAAAVAGYAPMSVMPAIMPDSGVDRMRRDFCTIAISFVKAWGDVYQRKTIKETPCWIEVTLHRPLQILDQLLKNSSQFGSS.

The segment at S115–P134 is disordered. The segment covering Q121 to P134 has biased composition (pro residues). The region spanning Q150–T273 is the MH1 domain. Positions 203, 247, 258, and 263 each coordinate Zn(2+). In terms of domain architecture, MH2 spans W350–S570.

It belongs to the dwarfin/SMAD family.

Its subcellular location is the cytoplasm. It is found in the nucleus. Involved in TGF-beta pathway. The protein is Dwarfin sma-4 (sma-4) of Caenorhabditis elegans.